A 734-amino-acid polypeptide reads, in one-letter code: Oligopeptide transporter 2 (734 aa).

A run of 14 helical transmembrane segments spans residues M44–Y64, P68–A88, G125–F145, F152–I172, F211–L231, L252–A272, F283–I303, F359–A379, W414–M434, W442–I462, M525–W545, Y596–L616, A644–F664, and V677–L697.

This sequence belongs to the oligopeptide OPT transporter (TC 2.A.67.1) family. Expressed in flowers, leaves, roots, and stems.

It localises to the membrane. In terms of biological role, involved in the translocation of tetra- and pentapeptides across the cellular membrane in an energy-dependent manner. The polypeptide is Oligopeptide transporter 2 (OPT2) (Arabidopsis thaliana (Mouse-ear cress)).